The sequence spans 179 residues: uncharacterized protein (179 aa).

This is an uncharacterized protein from Methanocaldococcus jannaschii (strain ATCC 43067 / DSM 2661 / JAL-1 / JCM 10045 / NBRC 100440) (Methanococcus jannaschii).